The primary structure comprises 468 residues: Neuronal acetylcholine receptor subunit alpha-5 (468 aa).

Residues 1 to 22 form the signal peptide; the sequence is MAARGSGPRALRLLLLVQLVAG. Residues 23-254 lie on the Extracellular side of the membrane; that stretch reads RCGLAGAAGG…VIKRLPLFYT (232 aa). 3 N-linked (GlcNAc...) asparagine glycosylation sites follow: asparagine 155, asparagine 183, and asparagine 229. A disulfide bridge connects residues cysteine 170 and cysteine 184. Cysteine 234 and cysteine 235 are oxidised to a cystine. The next 3 helical transmembrane spans lie at 255-275, 282-302, and 317-337; these read LFLIIPCIGLSFLTVLVFYLP, ICLCTSVLVSLTVFLLVIEEI, and LVFTMIFVTLSIMVTVFAINI. Residues 338-429 lie on the Cytoplasmic side of the membrane; sequence HHRSSSTHNA…WKFIAQVLDR (92 aa). The helical transmembrane segment at 430–451 threads the bilayer; it reads MFLWTFLFVSIVGSLGLFVPVI. Topologically, residues 452–468 are extracellular; that stretch reads YKWANILIPVHIGNANK.

The protein belongs to the ligand-gated ion channel (TC 1.A.9) family. Acetylcholine receptor (TC 1.A.9.1) subfamily. Alpha-5/CHRNA5 sub-subfamily. Neuronal AChR that forms heteropentamers composed of two different type of subunits: alpha and non-alpha (beta). CHRNA5/alpha-5 subunit is only able to form functional nAChRs when co-assembled with another alpha subunit, can be combined to CHRNA4/alpha-4 or CHRNA3/alpha-3 and CHRNB4/beta-4 or CHRNB2/beta-2 to give rise to functional receptors. Interacts with LYPD6.

It is found in the synaptic cell membrane. It localises to the cell membrane. The catalysed reaction is Ca(2+)(in) = Ca(2+)(out). It carries out the reaction K(+)(in) = K(+)(out). The enzyme catalyses Na(+)(in) = Na(+)(out). Activated by a myriad of ligands such as acetylcholine, cytisine, nicotine, choline and epibatidine. In terms of biological role, component of neuronal acetylcholine receptors (nAChRs) that function as pentameric, ligand-gated cation channels with high calcium permeability among other activities. nAChRs are excitatory neurotrasnmitter receptors formed by a collection of nAChR subunits known to mediate synaptic transmission in the nervous system and the neuromuscular junction. Each nAchR subunit confers differential attributes to channel properties, including activation, deactivation and desensitization kinetics, pH sensitivity, cation permeability, and binding to allosteric modulators. Has an accessory rather than functional role and is only able to form functional nAChRs when co-assembled with another beta subunit. Participates in pentameric assemblies along with CHRNA3, CHRNA4, CHRNB2 and CHRNB4. Increases receptor sensitivity to acetylcholine and nicotine when associated with CHRNA4 and CHRNB2. Plays a role in nicotine addiction. This chain is Neuronal acetylcholine receptor subunit alpha-5, found in Homo sapiens (Human).